Consider the following 492-residue polypeptide: Fascin-2 (492 aa).

This sequence belongs to the fascin family. Localized specifically in the outer and inner segments of the photoreceptor cells in the retina.

The protein localises to the cytoplasm. It is found in the cytoskeleton. The protein resides in the cell projection. Its subcellular location is the stereocilium. In terms of biological role, acts as an actin bundling protein. May play a pivotal role in photoreceptor cell-specific events, such as disk morphogenesis. This is Fascin-2 (FSCN2) from Homo sapiens (Human).